The sequence spans 191 residues: Probable DNA-directed RNA polymerase subunit delta (191 aa).

The HTH HARE-type domain occupies 14–83 (LSMIEVARAI…GENKWGLRSW (70 aa)). Positions 119–191 (EDAIDYRDDD…EDEEDEEPVL (73 aa)) are disordered.

As to quaternary structure, RNAP is composed of a core of 2 alpha, a beta and a beta' subunits. The core is associated with a delta subunit and one of several sigma factors.

Its function is as follows. Participates in both the initiation and recycling phases of transcription. In the presence of the delta subunit, RNAP displays an increased specificity of transcription, a decreased affinity for nucleic acids, and an increased efficiency of RNA synthesis because of enhanced recycling. This Streptococcus pyogenes serotype M6 (strain ATCC BAA-946 / MGAS10394) protein is Probable DNA-directed RNA polymerase subunit delta.